Reading from the N-terminus, the 238-residue chain is Ion-translocating oxidoreductase complex subunit E (238 aa).

Transmembrane regions (helical) follow at residues 41–61 (LGLG…VSLV), 71–91 (LPAF…LMQA), 95–115 (ELYQ…VILG), 130–150 (SFDG…LGGL), and 184–204 (GFLL…LIAL).

It belongs to the NqrDE/RnfAE family. In terms of assembly, the complex is composed of six subunits: RnfA, RnfB, RnfC, RnfD, RnfE and RnfG.

The protein localises to the cell inner membrane. Part of a membrane-bound complex that couples electron transfer with translocation of ions across the membrane. In Pseudomonas aeruginosa (strain LESB58), this protein is Ion-translocating oxidoreductase complex subunit E.